Consider the following 296-residue polypeptide: Probable ribosomal RNA small subunit methyltransferase A (296 aa).

Over residues 1-16 (MTDATSGSDPDSTTPV) the composition is skewed to polar residues. Residues 1 to 25 (MTDATSGSDPDSTTPVDLTGEDFRD) form a disordered region. Positions 44, 46, 72, 93, 121, and 136 each coordinate S-adenosyl-L-methionine.

The protein belongs to the class I-like SAM-binding methyltransferase superfamily. rRNA adenine N(6)-methyltransferase family. RsmA subfamily.

It localises to the cytoplasm. Specifically dimethylates two adjacent adenosines in the loop of a conserved hairpin near the 3'-end of 16S rRNA in the 30S particle. May play a critical role in biogenesis of 30S subunits. In Haloquadratum walsbyi (strain DSM 16790 / HBSQ001), this protein is Probable ribosomal RNA small subunit methyltransferase A.